A 232-amino-acid polypeptide reads, in one-letter code: NKG2-D type II integral membrane protein (232 aa).

Over 1–66 (MALIRDRKSH…IEKLKISPMF (66 aa)) the chain is Cytoplasmic. Residues 67–89 (VVRVLAIALAIRFTLNTLMWLAI) traverse the membrane as a helical; Signal-anchor for type II membrane protein segment. The Extracellular segment spans residues 90–232 (FKETFQPVLC…NTYICMKRAV (143 aa)). 2 cysteine pairs are disulfide-bonded: C112-C121 and C115-C126. The C-type lectin domain maps to 122-228 (HRNNCYQFFN…CANLNTYICM (107 aa)). N-linked (GlcNAc...) asparagine glycosylation is found at N137, N147, and N179. Intrachain disulfides connect C143-C227 and C205-C219.

In terms of assembly, homodimer; disulfide-linked. Heterohexamer composed of two subunits of KLRK1 and four subunits of HCST/DAP10. Isoform 1 (via transmembrane domain) interacts with HCST/DAP10; the interaction is required for KLRK1 cell surface expression on activated CD8(+) T-cells, but is dispensable on activated TYROBP-expressing NK cells. Isoform 2 (via transmembrane domain) interacts with HCST/DAP10 (via transmembrane domain); the interaction is required for KLRK1 NK cell surface expression and induces NK cell-mediated cytotoxicity. Isoform 2 (via transmembrane domain) interacts with TYROBP (via transmembrane domain); the interaction is required for KLRK1 NK cell surface expression and induce NK cell-mediated cytotoxicity and cytokine secretion. Isoform 1 does not interact with TYROBP. Interacts with CEACAM1; recruits PTPN6 that dephosphorylates VAV1. In terms of tissue distribution, expressed in natural killer (NK) cells, activated CD8(+) alpha-beta and gamma-delta T-cells and natural killer T (NKT) cells (at protein level). May be expressed on dendritic cell (DC). Isoform 1 is strongly expressed in natural killer (NK) cells. Isoform 2 is weakly expressed in natural killer (NK) cells. Isoform 1 and isoform 2 are expressed in stimulated, but not in unstimulated, CD8(+) T-cells and macrophages.

It is found in the cell membrane. Functions as an activating and costimulatory receptor involved in immunosurveillance upon binding to various cellular stress-inducible ligands displayed at the surface of autologous tumor cells and virus-infected cells. Provides both stimulatory and costimulatory innate immune responses on activated killer (NK) cells, leading to cytotoxic activity. Acts as a costimulatory receptor for T-cell receptor (TCR) in CD8(+) T-cell-mediated adaptive immune responses by amplifying T-cell activation. Stimulates perforin-mediated elimination of ligand-expressing tumor cells. Signaling involves calcium influx, culminating in the expression of TNF-alpha. Participates in NK cell-mediated bone marrow graft rejection. May play a regulatory role in differentiation and survival of NK cells. Binds to ligands belonging to various subfamilies of MHC class I-related glycoproteins including RAET1A, RAET1B, RAET1C, RAET1D, RAET1E, H60 and MULT1. The sequence is that of NKG2-D type II integral membrane protein (Klrk1) from Mus musculus (Mouse).